The sequence spans 412 residues: Phosphoglycerate kinase (412 aa).

Substrate is bound by residues 22–24, Arg37, 60–63, Arg120, and Arg172; these read DFN and HLGK. ATP is bound by residues Lys223, Gly310, Glu341, and 368-371; that span reads GGDS.

The protein belongs to the phosphoglycerate kinase family. As to quaternary structure, monomer.

Its subcellular location is the cytoplasm. The catalysed reaction is (2R)-3-phosphoglycerate + ATP = (2R)-3-phospho-glyceroyl phosphate + ADP. It participates in carbohydrate degradation; glycolysis; pyruvate from D-glyceraldehyde 3-phosphate: step 2/5. The sequence is that of Phosphoglycerate kinase from Spiroplasma citri.